Consider the following 292-residue polypeptide: MANKTRWIKSRIKSVNETKKITRAMYLISASKMKRSRDRLDSTRPYFEKINEFMKDLVVHGMQTNHILFEGSYKEGQKRLGVIVISGDKGLCGGYNANVIRSTLNLYENLSNKGEVIFFPIGTVGKNFLSRHGYKVEDNFNYQTQSVSVKVAKGIAQNVVKKYYRGDIHELYIIYTKLISTIKQDVVVKKLLPLDPSEFVSGEFKKDETIRYEPSPTNVLDVVIYEYLKGIIFGAMMDSYVSELAARMTAMDNATKSADEMIQKLVLKLNRERQAVITQEISEIISGAAALK.

It belongs to the ATPase gamma chain family. In terms of assembly, F-type ATPases have 2 components, CF(1) - the catalytic core - and CF(0) - the membrane proton channel. CF(1) has five subunits: alpha(3), beta(3), gamma(1), delta(1), epsilon(1). CF(0) has three main subunits: a, b and c.

The protein resides in the cell membrane. Functionally, produces ATP from ADP in the presence of a proton gradient across the membrane. The gamma chain is believed to be important in regulating ATPase activity and the flow of protons through the CF(0) complex. This chain is ATP synthase gamma chain, found in Caldicellulosiruptor saccharolyticus (strain ATCC 43494 / DSM 8903 / Tp8T 6331).